Consider the following 1549-residue polypeptide: Structural maintenance of chromosomes protein 4 (1549 aa).

Residues M1–P78 form a disordered region. Over residues K26–N36 the composition is skewed to basic residues. The segment covering R37–G59 has biased composition (basic and acidic residues). G121–S128 is a binding site for ATP. Residues M326–K604 adopt a coiled-coil conformation. Basic and acidic residues-rich tracts occupy residues L396 to K407 and A420 to K444. 2 disordered regions span residues L396–K444 and K460–K485. One can recognise an SMC hinge domain in the interval K619–M734. Coiled coils occupy residues K786–R1058 and E1144–A1182. A compositionally biased stretch (polar residues) spans I1440–D1459. Positions I1440–E1549 are disordered. The segment covering G1460–S1474 has biased composition (basic and acidic residues). Over residues T1510–K1523 the composition is skewed to polar residues.

This sequence belongs to the SMC family. SMC4 subfamily. In terms of assembly, component of the condensin I complex, which contains the mix-1/SMC2 and smc-4/SMC4 heterodimer, and three non SMC subunits that probably regulate the complex: dpy-26, capg-1 and dpy-28. Within the complex, interacts with mix-1, dpy-26, capg-1 and dpy-28. Component of the condensin II complex, which contains the mix-1/SMC2 and smc-4/SMC4 heterodimer, and three non SMC subunits, kle-2, capg-2 and hcp-6 that probably regulate the complex. Within the complex, interacts with mix-1, kle-2, capg-2 and hcp-6. Interacts with smcl-1.

The protein resides in the nucleus. Its subcellular location is the chromosome. Central component of the condensin I complex, a complex required for conversion of interphase chromatin into mitotic-like condense chromosomes. The condensin I complex introduces positive supercoils into relaxed DNA in the presence of type I topoisomerases. Converts nicked DNA into positive knotted forms in the presence of type II topoisomerases. Also a central component of the condensin II complex, a complex that seems to play a role in prophase chromosome condensation. Both the condensin complex I and II play a role in meiotic and mitotic chromosome segregation. Plays a role in robust cytokinesis upon the presence of chromatin obstructions. In Caenorhabditis elegans, this protein is Structural maintenance of chromosomes protein 4 (smc-4).